The sequence spans 262 residues: Proenkephalin-A-A (262 aa).

An N-terminal signal peptide occupies residues 1–24; that stretch reads MGLEARHCCMFLLVFASLSVEIRA. 3 cysteine pairs are disulfide-bonded: cysteine 26/cysteine 48, cysteine 30/cysteine 52, and cysteine 33/cysteine 65. 5 consecutive propeptides follow at residues 110-131, 139-177, 190-201, 211-221, and 229-253; these read MDEL…LAKN, EYDS…GEIN, STDLEDETSGIQ, VGRPEWWEDYQ, and TRFT…PDME.

The protein belongs to the opioid neuropeptide precursor family. In terms of processing, the N-terminal domain contains 6 conserved cysteines thought to be involved in disulfide bonding and/or processing.

It is found in the secreted. In terms of biological role, enkephalin neuropeptides compete with and mimic the effects of opiate drugs. They play a role in a number of physiologic functions, including pain perception and responses to stress. The chain is Proenkephalin-A-A (penk-a) from Xenopus laevis (African clawed frog).